Reading from the N-terminus, the 349-residue chain is ATPase GET3 (349 aa).

26 to 33 (KGGVGKTT) contacts ATP. The active site involves aspartate 57. Positions 242 and 269 each coordinate ATP. Residues cysteine 281 and cysteine 284 each contribute to the Zn(2+) site.

Belongs to the arsA ATPase family. In terms of assembly, homodimer. Component of the Golgi to ER traffic (GET) complex, which is composed of GET1, GET2 and GET3. Within the complex, GET1 and GET2 form a heterotetramer which is stabilized by phosphatidylinositol binding and which binds to the GET3 homodimer. Interacts with the chloride channel protein GEF1.

Its subcellular location is the cytoplasm. It is found in the endoplasmic reticulum. The protein localises to the golgi apparatus. Its function is as follows. ATPase required for the post-translational delivery of tail-anchored (TA) proteins to the endoplasmic reticulum. Recognizes and selectively binds the transmembrane domain of TA proteins in the cytosol. This complex then targets to the endoplasmic reticulum by membrane-bound receptors GET1 and GET2, where the tail-anchored protein is released for insertion. This process is regulated by ATP binding and hydrolysis. ATP binding drives the homodimer towards the closed dimer state, facilitating recognition of newly synthesized TA membrane proteins. ATP hydrolysis is required for insertion. Subsequently, the homodimer reverts towards the open dimer state, lowering its affinity for the GET1-GET2 receptor, and returning it to the cytosol to initiate a new round of targeting. Cooperates with the HDEL receptor ERD2 to mediate the ATP-dependent retrieval of resident ER proteins that contain a C-terminal H-D-E-L retention signal from the Golgi to the ER. Involved in low-level resistance to the oxyanions arsenite and arsenate, and in heat tolerance. In Candida tropicalis (strain ATCC MYA-3404 / T1) (Yeast), this protein is ATPase GET3.